Consider the following 352-residue polypeptide: C-C chemokine receptor type 5 (352 aa).

The Extracellular portion of the chain corresponds to 1–30 (MDYQVSSPTYDIDYYTSEPCQKINVKQIAA). Position 3 is a sulfotyrosine (Y3). O-linked (GalNAc...) serine glycans are attached at residues S6 and S7. Y10, Y14, and Y15 each carry sulfotyrosine. Disulfide bonds link C20–C269 and C101–C178. The helical transmembrane segment at 31–58 (RLLPPLYSLVFIFGFVGNILVVLILINC) threads the bilayer. At 59-68 (KRLKSMTDIY) the chain is on the cytoplasmic side. The helical transmembrane segment at 69–89 (LLNLAISDLLFLLTIPFWAHY) threads the bilayer. Topologically, residues 90–102 (AAAQWDFGNTMCQ) are extracellular. A helical transmembrane segment spans residues 103–124 (LLTGLYLIGFFSGIFFIILLTI). The Cytoplasmic segment spans residues 125-141 (DRYLAIVHAVFALKART). A helical transmembrane segment spans residues 142-166 (VTFGLVTSVITWVVAVFASLPGIIF). The Extracellular portion of the chain corresponds to 167–198 (TRSQREGLHYTCSSHFPSSQYQFWKNFQTLKI). Residues 199-218 (VILGLVLPLLVMVICYSGIL) form a helical membrane-spanning segment. At 219–235 (KTLLRCRNEKKRHRAVR) the chain is on the cytoplasmic side. Residues 236 to 260 (LIFTIMIVYFLFWAPYNIVLLLNTF) traverse the membrane as a helical segment. The Extracellular segment spans residues 261–277 (QEFFGLNNCSSSNRLDQ). Residues 278–301 (AMQVTETLGMTHCCINPIIYAFVG) form a helical membrane-spanning segment. The Cytoplasmic segment spans residues 302-352 (EKFRNYLLVFFQKHLAKRFCKCCSIFQQEAPERASSVYTRSTGEQETTVGL). S-palmitoyl cysteine attachment occurs at residues C321, C323, and C324. Phosphoserine; by BARK1 occurs at positions 336, 337, and 342.

Belongs to the G-protein coupled receptor 1 family. Interacts with PRAF2. Efficient ligand binding to CCL3/MIP-1alpha and CCL4/MIP-1beta requires sulfation, O-glycosylation and sialic acid modifications. Glycosylation on Ser-6 is required for efficient binding of CCL4. Interacts with GRK2. Interacts with ARRB1 and ARRB2. Interacts with CNIH4. Interacts with S100A4; this interaction stimulates T-lymphocyte chemotaxis. Post-translationally, sulfated on at least 2 of the N-terminal tyrosines. Sulfation is required for efficient binding of the chemokines, CCL3 and CCL4. Palmitoylation in the C-terminal is important for cell surface expression. In terms of processing, phosphorylation on serine residues in the C-terminal is stimulated by binding CC chemokines especially by APO-RANTES. Post-translationally, O-glycosylated, but not N-glycosylated. Ser-6 appears to be the major site even if Ser-7 may be also O-glycosylated. Also sialylated glycans present which contribute to chemokine binding. Thr-16 and Ser-17 may also be glycosylated and, if so, with small moieties such as a T-antigen.

Its subcellular location is the cell membrane. Functionally, receptor for a number of inflammatory CC-chemokines including CCL3/MIP-1-alpha, CCL4/MIP-1-beta and RANTES and subsequently transduces a signal by increasing the intracellular calcium ion level. May play a role in the control of granulocytic lineage proliferation or differentiation. Participates in T-lymphocyte migration to the infection site by acting as a chemotactic receptor. This chain is C-C chemokine receptor type 5 (CCR5), found in Allochrocebus lhoesti (L'Hoest's monkey).